The chain runs to 143 residues: uncharacterized protein (143 aa).

The interval 1-37 (MSAPASSSAIAPSQPTAPGHARHSASWSASASDPSGA) is disordered.

It belongs to the dynein light chain Tctex-type family.

This is an uncharacterized protein from Mycosarcoma maydis (Corn smut fungus).